The following is a 358-amino-acid chain: Methylthioribose-1-phosphate isomerase (358 aa).

Substrate is bound by residues 54–56 (RGA), R96, and Q205. D246 serves as the catalytic Proton donor. 256–257 (NK) is a binding site for substrate.

This sequence belongs to the eIF-2B alpha/beta/delta subunits family. MtnA subfamily.

The enzyme catalyses 5-(methylsulfanyl)-alpha-D-ribose 1-phosphate = 5-(methylsulfanyl)-D-ribulose 1-phosphate. Its pathway is amino-acid biosynthesis; L-methionine biosynthesis via salvage pathway; L-methionine from S-methyl-5-thio-alpha-D-ribose 1-phosphate: step 1/6. In terms of biological role, catalyzes the interconversion of methylthioribose-1-phosphate (MTR-1-P) into methylthioribulose-1-phosphate (MTRu-1-P). In Pseudomonas syringae pv. tomato (strain ATCC BAA-871 / DC3000), this protein is Methylthioribose-1-phosphate isomerase.